Consider the following 666-residue polypeptide: Nuclear distribution protein nudE homolog 1 (666 aa).

Positions 14 to 195 (EEEIAHYREK…KDQLARAIAT (182 aa)) form a coiled coil. Disordered regions lie at residues 40–64 (EFQQSSKELEDEMEQELAANDKQQA), 220–310 (DDIN…SGIP), 369–388 (KRVTSTTSTTSSTTTAPAPH), and 397–666 (DHNT…KVKK). A compositionally biased stretch (polar residues) spans 251–274 (RSGTMSSIPVASPSTKRFSQQIPH). Low complexity-rich tracts occupy residues 275-287 (SPSFSTLSRSTTS) and 372-383 (TSTTSTTSSTTT). Positions 400–410 (TTPTAQSQQFP) are enriched in polar residues. Composition is skewed to low complexity over residues 449-465 (PTFRSSSTTSNRSLPSR), 473-485 (ASGSARSTTSGTA), and 536-554 (SATPTSGFSSFSASASTSN). 2 stretches are compositionally biased toward polar residues: residues 587-599 (RQSLSGAGPTPTT) and 614-638 (SSLSNMDKPSLMSASPGSRTPSGRP).

The protein belongs to the nudE family. As to quaternary structure, self-associates. Interacts with PAC1.

The protein localises to the cytoplasm. The protein resides in the cytoskeleton. Functionally, required for nuclear migration. The protein is Nuclear distribution protein nudE homolog 1 (NDE1) of Cryptococcus neoformans var. neoformans serotype D (strain B-3501A) (Filobasidiella neoformans).